A 114-amino-acid chain; its full sequence is NADH-ubiquinone oxidoreductase chain 3 (114 aa).

A run of 3 helical transmembrane segments spans residues methionine 1–phenylalanine 21, phenylalanine 55–phenylalanine 75, and methionine 85–phenylalanine 105.

Belongs to the complex I subunit 3 family.

The protein resides in the mitochondrion membrane. The enzyme catalyses a ubiquinone + NADH + 5 H(+)(in) = a ubiquinol + NAD(+) + 4 H(+)(out). Its function is as follows. Core subunit of the mitochondrial membrane respiratory chain NADH dehydrogenase (Complex I) that is believed to belong to the minimal assembly required for catalysis. Complex I functions in the transfer of electrons from NADH to the respiratory chain. The immediate electron acceptor for the enzyme is believed to be ubiquinone. This is NADH-ubiquinone oxidoreductase chain 3 (ND3) from Rhipicephalus sanguineus (Brown dog tick).